Consider the following 254-residue polypeptide: Imidazole glycerol phosphate synthase subunit HisF (254 aa).

Catalysis depends on residues D12 and D131.

Belongs to the HisA/HisF family. In terms of assembly, heterodimer of HisH and HisF.

Its subcellular location is the cytoplasm. The enzyme catalyses 5-[(5-phospho-1-deoxy-D-ribulos-1-ylimino)methylamino]-1-(5-phospho-beta-D-ribosyl)imidazole-4-carboxamide + L-glutamine = D-erythro-1-(imidazol-4-yl)glycerol 3-phosphate + 5-amino-1-(5-phospho-beta-D-ribosyl)imidazole-4-carboxamide + L-glutamate + H(+). The protein operates within amino-acid biosynthesis; L-histidine biosynthesis; L-histidine from 5-phospho-alpha-D-ribose 1-diphosphate: step 5/9. IGPS catalyzes the conversion of PRFAR and glutamine to IGP, AICAR and glutamate. The HisF subunit catalyzes the cyclization activity that produces IGP and AICAR from PRFAR using the ammonia provided by the HisH subunit. In Kocuria rhizophila (strain ATCC 9341 / DSM 348 / NBRC 103217 / DC2201), this protein is Imidazole glycerol phosphate synthase subunit HisF.